The primary structure comprises 291 residues: Ribosomal RNA small subunit methyltransferase H (291 aa).

S-adenosyl-L-methionine contacts are provided by residues G36–H38, D55, A90, D102, and Q109.

This sequence belongs to the methyltransferase superfamily. RsmH family.

The protein resides in the cytoplasm. The catalysed reaction is cytidine(1402) in 16S rRNA + S-adenosyl-L-methionine = N(4)-methylcytidine(1402) in 16S rRNA + S-adenosyl-L-homocysteine + H(+). Its function is as follows. Specifically methylates the N4 position of cytidine in position 1402 (C1402) of 16S rRNA. The protein is Ribosomal RNA small subunit methyltransferase H of Thermosipho africanus (strain TCF52B).